The sequence spans 376 residues: MASYTSTSGQFAVGKVAAANQDDETCMHALKLLGGLAVPFTIKAVIELGIMDLLLAADRAMTAEALTAALLCPAPAPAAAAAMVDRMLRFLASHGVVRCATESEELGSDDGKSCRRYAAAPVCKWFARGGGVESVVPMGFWMTSTTNMETWHNIKDGVLAGETPFDKAYGMPVFEYLGANGTMNTLFNEAMASHSMIITKRLLEVFRGFENYSVLVDVGGGNGTTMQMIRSQYENISGINYDLPHVIAQASPIEGVEHVAGNMFDNIPRGDAIILKWILHNWGDKECVKILKNCYTALPVNGTVIILEYILPETPEETLASQLAFDFDLGMMLFFGASGKERTEKELLELAREAGFSGDYTATYIFANVWAHEFTK.

S-adenosyl-L-methionine is bound by residues G219, D242, M263, and K276. H280 serves as the catalytic Proton acceptor.

Belongs to the class I-like SAM-binding methyltransferase superfamily. Cation-independent O-methyltransferase family. COMT subfamily. As to quaternary structure, homodimer. Expressed predominantly in root hairs.

It carries out the reaction (E)-isoeugenol + S-adenosyl-L-methionine = (E)-isomethyleugenol + S-adenosyl-L-homocysteine + H(+). O-methyltransferase. Substrate preference is eugenol &gt;&gt; orcinol monomethyl ether &gt; resorcinol monomethyl ether. The polypeptide is Eugenol O-methyltransferase (EOMT) (Sorghum bicolor (Sorghum)).